We begin with the raw amino-acid sequence, 123 residues long: Putative membrane protein insertion efficiency factor (123 aa).

The tract at residues 1 to 23 (MGSCGGKHTGKGAPKPYSRNFTD) is disordered.

Belongs to the UPF0161 family.

Its subcellular location is the cell inner membrane. Could be involved in insertion of integral membrane proteins into the membrane. This chain is Putative membrane protein insertion efficiency factor, found in Brucella ovis (strain ATCC 25840 / 63/290 / NCTC 10512).